A 417-amino-acid polypeptide reads, in one-letter code: Acid phosphatase (417 aa).

A signal peptide spans 1-19 (MFTKQSLVTLLGGLSLAVA). N-linked (GlcNAc...) asparagine glycans are attached at residues Asn122, Asn187, and Asn209. The active-site Proton donor is Asp216. Residues Asn218, Asn333, and Asn383 are each glycosylated (N-linked (GlcNAc...) asparagine).

In terms of processing, the N-terminus is blocked.

The protein resides in the secreted. It carries out the reaction a phosphate monoester + H2O = an alcohol + phosphate. This is Acid phosphatase (phoA) from Aspergillus niger.